A 66-amino-acid polypeptide reads, in one-letter code: Large ribosomal subunit protein bL35 (66 aa).

The segment at 22 to 41 (VMSAQRGKRHGMIKRTKKQI) is disordered. Positions 27 to 41 (RGKRHGMIKRTKKQI) are enriched in basic residues.

The protein belongs to the bacterial ribosomal protein bL35 family.

The sequence is that of Large ribosomal subunit protein bL35 from Rhodopseudomonas palustris (strain TIE-1).